Here is a 400-residue protein sequence, read N- to C-terminus: Phosphoglycerate kinase (400 aa).

Substrate-binding positions include 21 to 23, Arg36, 59 to 62, Arg116, and Arg149; these read DLN and HLGR. ATP contacts are provided by residues Lys200, Glu317, and 343–346; that span reads GGDT.

The protein belongs to the phosphoglycerate kinase family. As to quaternary structure, monomer.

Its subcellular location is the cytoplasm. It carries out the reaction (2R)-3-phosphoglycerate + ATP = (2R)-3-phospho-glyceroyl phosphate + ADP. The protein operates within carbohydrate degradation; glycolysis; pyruvate from D-glyceraldehyde 3-phosphate: step 2/5. This is Phosphoglycerate kinase from Blochmanniella floridana.